Here is a 74-residue protein sequence, read N- to C-terminus: uncharacterized protein (74 aa).

The signal sequence occupies residues 1-25 (MMMTDLPENIRKTAVALLRLGEATA).

This is an uncharacterized protein from Archaeoglobus fulgidus (strain ATCC 49558 / DSM 4304 / JCM 9628 / NBRC 100126 / VC-16).